Here is a 78-residue protein sequence, read N- to C-terminus: Acyl carrier protein (78 aa).

A Carrier domain is found at 2-77 (STIEERVKKI…AAIDYVNSHQ (76 aa)). O-(pantetheine 4'-phosphoryl)serine is present on serine 37.

The protein belongs to the acyl carrier protein (ACP) family. Post-translationally, 4'-phosphopantetheine is transferred from CoA to a specific serine of apo-ACP by AcpS. This modification is essential for activity because fatty acids are bound in thioester linkage to the sulfhydryl of the prosthetic group.

The protein localises to the cytoplasm. Its pathway is lipid metabolism; fatty acid biosynthesis. In terms of biological role, carrier of the growing fatty acid chain in fatty acid biosynthesis. This Pseudomonas putida (strain W619) protein is Acyl carrier protein.